Reading from the N-terminus, the 316-residue chain is MVVMPPQNSVNESEGRYLQDGFWQHGRFYGSWKPGKYLFPIDSEELNRLDIFHKVFLLARDNKPFLAPIRRTSPRIMDIGTGTGIWAINVAEECLSDAQIMAVDLNQIQPALIPPGFMPKQYDIEEPSWGPLLADCDLIHMRMLLGSIQTDLWPQVYHNAFEHLTPGIGFLEHIEVDWIPRCDDDERPANSAFVKWAELFLDGMDRFNRSVRVIPQEHRQMLEATGFTDVKQEVIKAYVCPWSADRNEREIARWFNIGLSHSLEAMSLKPLIEKLGFEAEDVRELCERAKRETCVLRYHTYCNIHVWTARKPGPQQ.

Belongs to the methyltransferase superfamily. LaeA methyltransferase family. In terms of assembly, component of the heterotrimeric velvet complex composed of LAE1, VEL1 and VEL2; VEL1 acting as a bridging protein between LAE1 and VEL2. Interacts with VEL1.

The protein localises to the nucleus. The enzyme catalyses L-methionyl-[protein] + S-adenosyl-L-methionine = S-methyl-L-methionyl-[protein] + S-adenosyl-L-homocysteine. In terms of biological role, methyltransferase that performs automethylation. No other methyl-accepting substrate has been identified yet. Component of the velvet transcription factor complex that acts as a global regulator for secondary metabolite gene expression. Controls the expression of the gibberellins gene clusters, but does not affect bikaverin production. Controls the expression of the fusaric acid gene cluster. Acts as a virulence factors during infection, most likely through activation of gibberellins biosynthesis. The chain is Secondary metabolism regulator LAE1 from Gibberella fujikuroi (strain CBS 195.34 / IMI 58289 / NRRL A-6831) (Bakanae and foot rot disease fungus).